The primary structure comprises 510 residues: Protein disulfide-isomerase (510 aa).

The signal sequence occupies residues 1–19 (MLRRALLCLAVAAAPGLYA). The Thioredoxin 1 domain maps to 20-136 (DAPEEEDHVL…IVNWLKKRTG (117 aa)). Active-site nucleophile residues include C55 and C58. C55 and C58 are joined by a disulfide. N6-acetyllysine is present on K202. N6-succinyllysine is present on residues K224 and K273. Phosphoserine is present on residues S333 and S359. The region spanning 351–477 (GKIKPHLMSQ…FKKFLESGGQ (127 aa)) is the Thioredoxin 2 domain. Catalysis depends on nucleophile residues C399 and C402. C399 and C402 are oxidised to a cystine. At S429 the chain carries Phosphoserine. The tract at residues 473 to 510 (ESGGQDGAGDDDDLEDLEEAEEPDMEEDDDQKAVKDEL) is disordered. Residues 480-502 (AGDDDDLEDLEEAEEPDMEEDDD) are compositionally biased toward acidic residues. Positions 507–510 (KDEL) match the Prevents secretion from ER motif.

The protein belongs to the protein disulfide isomerase family. Heterodimer; heterodimerizes with the protein microsomal triglyceride transfer MTTP. Homodimer. Homodimer. Monomers and homotetramers may also occur. Interacts with P4HA2, forming a heterotetramer consisting of 2 alpha subunits (P4HA2) and 2 beta (P4HB), where P4HB plays the role of a structural subunit; this tetramer catalyzes the formation of 4-hydroxyproline in collagen. Also constitutes the structural subunit of the microsomal triacylglycerol transfer protein MTTP in mammalian cells. Stabilizes both enzymes and retain them in the ER without contributing to the catalytic activity. Binds UBQLN1. Interacts with ERO1B. Interacts with ILDR2. Interacts with ERN1/IRE1A (via N-terminus); the interaction is enhanced by phosphorylation of P4HB by FAM20C in response to endoplasmic reticulum stress and results in attenuation of ERN1 activity. Post-translationally, phosphorylation of Ser-359 by FAM20C is induced by endoplasmic reticulum stress and results in a functional switch from oxidoreductase to molecular chaperone. It also promotes interaction with ERN1.

The protein localises to the endoplasmic reticulum. Its subcellular location is the endoplasmic reticulum lumen. It is found in the melanosome. It localises to the cell membrane. The catalysed reaction is Catalyzes the rearrangement of -S-S- bonds in proteins.. Functionally, this multifunctional protein catalyzes the formation, breakage and rearrangement of disulfide bonds. At the cell surface, seems to act as a reductase that cleaves disulfide bonds of proteins attached to the cell. May therefore cause structural modifications of exofacial proteins. Inside the cell, seems to form/rearrange disulfide bonds of nascent proteins. At high concentrations and following phosphorylation by FAM20C, functions as a chaperone that inhibits aggregation of misfolded proteins. At low concentrations, facilitates aggregation (anti-chaperone activity). May be involved with other chaperones in the structural modification of the TG precursor in hormone biogenesis. Also acts as a structural subunit of various enzymes such as prolyl 4-hydroxylase and microsomal triacylglycerol transfer protein MTTP. Receptor for LGALS9; the interaction retains P4HB at the cell surface of Th2 T helper cells, increasing disulfide reductase activity at the plasma membrane, altering the plasma membrane redox state and enhancing cell migration. This is Protein disulfide-isomerase (P4HB) from Macaca fuscata fuscata (Japanese macaque).